The following is a 955-amino-acid chain: Isoleucine--tRNA ligase (955 aa).

Residues 58-68 carry the 'HIGH' region motif; sequence IYANGDIHIGH. L-isoleucyl-5'-AMP is bound at residue Glu-552. The 'KMSKS' region signature appears at 593–597; that stretch reads KMSKS. Lys-596 is a binding site for ATP. Zn(2+) is bound by residues Cys-918, Cys-921, Cys-938, and Cys-941.

Belongs to the class-I aminoacyl-tRNA synthetase family. IleS type 1 subfamily. In terms of assembly, monomer. Zn(2+) serves as cofactor.

The protein resides in the cytoplasm. The enzyme catalyses tRNA(Ile) + L-isoleucine + ATP = L-isoleucyl-tRNA(Ile) + AMP + diphosphate. In terms of biological role, catalyzes the attachment of isoleucine to tRNA(Ile). As IleRS can inadvertently accommodate and process structurally similar amino acids such as valine, to avoid such errors it has two additional distinct tRNA(Ile)-dependent editing activities. One activity is designated as 'pretransfer' editing and involves the hydrolysis of activated Val-AMP. The other activity is designated 'posttransfer' editing and involves deacylation of mischarged Val-tRNA(Ile). The polypeptide is Isoleucine--tRNA ligase (Vesicomyosocius okutanii subsp. Calyptogena okutanii (strain HA)).